The chain runs to 123 residues: Ig heavy chain V region H8 (123 aa).

Residues 1–114 (EVKLVESGGG…BSYWYFDVWG (114 aa)) enclose the Ig-like domain.

The chain is Ig heavy chain V region H8 from Mus musculus (Mouse).